Here is a 62-residue protein sequence, read N- to C-terminus: Conotoxin Mi5.2 (62 aa).

The N-terminal stretch at 1–19 (MRCVPVFIILLLLIPSASS) is a signal peptide. The propeptide occupies 20–50 (VDVQPLTRDDVPLASFLDDARRTLRSPWMTR).

The protein belongs to the conotoxin T superfamily. Post-translationally, contains 2 disulfide bonds that can be either 'C1-C3, C2-C4' or 'C1-C4, C2-C3', since these disulfide connectivities have been observed for conotoxins with cysteine framework V (for examples, see AC P0DQQ7 and AC P81755). Expressed by the venom duct.

The protein localises to the secreted. The polypeptide is Conotoxin Mi5.2 (Conus miles (Soldier cone)).